The sequence spans 276 residues: MLKRRLLLLWALSLLASLVYSAPRPANQRVGIVGGHEASESKWPWQVSLRFKLNYWIHFCGGSLIHPQWVLTAAHCVGPHIKSPQLFRVQLREQYLYYGDQLLSLNRIVVHPHYYTAEGGADVALLELEVPVNVSTHIHPISLPPASETFPPGTSCWVTGWGDIDNDEPLPPPYPLKQVKVPIVENSLCDRKYHTGLYTGDDFPIVHDGMLCAGNTRRDSCQGDSGGPLVCKVKGTWLQAGVVSWGEGCAQPNKPGIYTRVTYYLDWIHRYVPEHS.

The N-terminal stretch at 1-21 (MLKRRLLLLWALSLLASLVYS) is a signal peptide. A propeptide spans 22 to 31 (APRPANQRVG) (activation peptide). Positions 32 to 273 (IVGGHEASES…YLDWIHRYVP (242 aa)) constitute a Peptidase S1 domain. A disulfide bond links cysteine 60 and cysteine 76. Catalysis depends on histidine 75, which acts as the Charge relay system. Tyrosine 98 carries the post-translational modification Phosphotyrosine. The active-site Charge relay system is the aspartate 122. Asparagine 133 carries N-linked (GlcNAc...) asparagine glycosylation. 3 disulfide bridges follow: cysteine 156/cysteine 231, cysteine 189/cysteine 212, and cysteine 221/cysteine 249. Serine 225 functions as the Charge relay system in the catalytic mechanism.

Belongs to the peptidase S1 family. Tryptase subfamily. As to quaternary structure, homotetramer. The active tetramer is converted to inactive monomers at neutral and acidic pH in the absence of heparin. Low concentrations of inactive monomers become active monomers at pH 6.0 in the presence of heparin. When the concentration of active monomers is higher, they convert to active monomers and then to active tetramers. These monomers are active and functionally distinct from the tetrameric enzyme. In contrast to the hidden active sites in the tetrameric form, the active site of the monomeric form is accessible for macromolecular proteins and inhibitors, e.g. fibrinogen which is a substrate for the monomeric but not for the tetrameric form. The monomeric form forms a complex with SERPINB6. During embryogenesis, detected primarily in skin.

The protein localises to the secreted. It carries out the reaction Preferential cleavage: Arg-|-Xaa, Lys-|-Xaa, but with more restricted specificity than trypsin.. In terms of biological role, tryptase is the major neutral protease present in mast cells and is secreted upon the coupled activation-degranulation response of this cell type. Plays a role in innate immunity. In Mus musculus (Mouse), this protein is Tryptase beta-2 (Tpsb2).